A 241-amino-acid polypeptide reads, in one-letter code: Ribonuclease 3 (241 aa).

An RNase III domain is found at 8–137; the sequence is LTLLKNRLGI…LLGAVYLDQG (130 aa). Glu50 serves as a coordination point for Mg(2+). Asp54 is a catalytic residue. Mg(2+) contacts are provided by Asp123 and Glu126. Residue Glu126 is part of the active site. Residues 164–233 enclose the DRBM domain; that stretch reads DYKTELQELV…AKKALMKSDL (70 aa). Positions 214–241 are disordered; sequence RSKKEAEQQAAKKALMKSDLGSACNHKK.

It belongs to the ribonuclease III family. As to quaternary structure, homodimer. Mg(2+) serves as cofactor.

Its subcellular location is the cytoplasm. It carries out the reaction Endonucleolytic cleavage to 5'-phosphomonoester.. Functionally, digests double-stranded RNA. Involved in the processing of primary rRNA transcript to yield the immediate precursors to the large and small rRNAs (23S and 16S). Processes some mRNAs, and tRNAs when they are encoded in the rRNA operon. Processes pre-crRNA and tracrRNA of type II CRISPR loci if present in the organism. The polypeptide is Ribonuclease 3 (Pelotomaculum thermopropionicum (strain DSM 13744 / JCM 10971 / SI)).